Reading from the N-terminus, the 206-residue chain is Phosphoribosylglycinamide formyltransferase (206 aa).

Residue 13–15 coordinates N(1)-(5-phospho-beta-D-ribosyl)glycinamide; sequence GTN. (6R)-10-formyltetrahydrofolate contacts are provided by residues 99–102 and Asn121; that span reads MIIL. His123 functions as the Proton donor in the catalytic mechanism. Residue Asp163 coordinates (6R)-10-formyltetrahydrofolate. Glu192 is a binding site for N(1)-(5-phospho-beta-D-ribosyl)glycinamide.

It belongs to the GART family.

It carries out the reaction N(1)-(5-phospho-beta-D-ribosyl)glycinamide + (6R)-10-formyltetrahydrofolate = N(2)-formyl-N(1)-(5-phospho-beta-D-ribosyl)glycinamide + (6S)-5,6,7,8-tetrahydrofolate + H(+). It functions in the pathway purine metabolism; IMP biosynthesis via de novo pathway; N(2)-formyl-N(1)-(5-phospho-D-ribosyl)glycinamide from N(1)-(5-phospho-D-ribosyl)glycinamide (10-formyl THF route): step 1/1. The sequence is that of Phosphoribosylglycinamide formyltransferase (purN) from Dictyostelium discoideum (Social amoeba).